Consider the following 203-residue polypeptide: Peptidyl-tRNA hydrolase (203 aa).

A tRNA-binding site is contributed by Y18. H23 serves as the catalytic Proton acceptor. TRNA-binding residues include F69, N71, and N117.

It belongs to the PTH family. Monomer.

The protein localises to the cytoplasm. It carries out the reaction an N-acyl-L-alpha-aminoacyl-tRNA + H2O = an N-acyl-L-amino acid + a tRNA + H(+). Functionally, hydrolyzes ribosome-free peptidyl-tRNAs (with 1 or more amino acids incorporated), which drop off the ribosome during protein synthesis, or as a result of ribosome stalling. Its function is as follows. Catalyzes the release of premature peptidyl moieties from peptidyl-tRNA molecules trapped in stalled 50S ribosomal subunits, and thus maintains levels of free tRNAs and 50S ribosomes. The polypeptide is Peptidyl-tRNA hydrolase (Prochlorococcus marinus subsp. pastoris (strain CCMP1986 / NIES-2087 / MED4)).